A 212-amino-acid chain; its full sequence is Chloramphenicol acetyltransferase (212 aa).

Histidine 186 (proton acceptor) is an active-site residue.

This sequence belongs to the chloramphenicol acetyltransferase family. Homotrimer.

The enzyme catalyses chloramphenicol + acetyl-CoA = chloramphenicol 3-acetate + CoA. Its function is as follows. This enzyme is an effector of chloramphenicol resistance in bacteria. The chain is Chloramphenicol acetyltransferase (catD) from Clostridioides difficile (Peptoclostridium difficile).